The chain runs to 278 residues: Small ribosomal subunit protein uS3 (278 aa).

The KH type-2 domain maps to 39–107 (LRKAIAKKYV…KVQLNIVEIS (69 aa)). A disordered region spans residues 244–278 (AKPKRVTKKAEAEASAEEKPKRAAKKAENITKEEE). The segment covering 251 to 278 (KKAEAEASAEEKPKRAAKKAENITKEEE) has biased composition (basic and acidic residues).

This sequence belongs to the universal ribosomal protein uS3 family. Part of the 30S ribosomal subunit. Forms a tight complex with proteins S10 and S14.

Its function is as follows. Binds the lower part of the 30S subunit head. Binds mRNA in the 70S ribosome, positioning it for translation. This Dehalococcoides mccartyi (strain ATCC BAA-2266 / KCTC 15142 / 195) (Dehalococcoides ethenogenes (strain 195)) protein is Small ribosomal subunit protein uS3.